The sequence spans 333 residues: Protein farnesyltransferase/geranylgeranyltransferase type-1 subunit alpha (333 aa).

PFTA repeat units follow at residues 61 to 95 (LSSR…SLKV), 96 to 130 (DLHV…KLGP), 132 to 166 (ARNS…NLGG), 167 to 200 (WEDE…RSPV), and 207 to 241 (MRES…DEST).

This sequence belongs to the protein prenyltransferase subunit alpha family. As to quaternary structure, heterodimer of FTA and FTB (farnesyltransferase). Heterodimer of an alpha and a beta subunit. Requires Mg(2+) as cofactor.

The catalysed reaction is L-cysteinyl-[protein] + (2E,6E)-farnesyl diphosphate = S-(2E,6E)-farnesyl-L-cysteinyl-[protein] + diphosphate. The enzyme catalyses geranylgeranyl diphosphate + L-cysteinyl-[protein] = S-geranylgeranyl-L-cysteinyl-[protein] + diphosphate. Essential subunit of both the farnesyltransferase and the geranylgeranyltransferase complex. Contributes to the transfer of a farnesyl or geranylgeranyl moiety from farnesyl or geranylgeranyl diphosphate to a cysteine at the fourth position from the C-terminus of several proteins having the C-terminal sequence Cys-aliphatic-aliphatic-X. This Pisum sativum (Garden pea) protein is Protein farnesyltransferase/geranylgeranyltransferase type-1 subunit alpha (FTA).